A 269-amino-acid polypeptide reads, in one-letter code: 2-keto-4-pentenoate hydratase (269 aa).

This sequence belongs to the hydratase/decarboxylase family. MhpD subfamily. A divalent metal cation serves as cofactor.

It carries out the reaction (S)-4-hydroxy-2-oxopentanoate = (2Z)-2-hydroxypenta-2,4-dienoate + H2O. The protein operates within aromatic compound metabolism; 3-phenylpropanoate degradation. Functionally, catalyzes the conversion of 2-hydroxypentadienoic acid (enolic form of 2-oxopent-4-enoate) to 4-hydroxy-2-ketopentanoic acid. The sequence is that of 2-keto-4-pentenoate hydratase from Paraburkholderia xenovorans (strain LB400).